Here is a 284-residue protein sequence, read N- to C-terminus: 4-hydroxybenzoate octaprenyltransferase (284 aa).

7 helical membrane passes run 13-32 (FNRP…ALWL), 90-110 (ALML…FTDL), 112-132 (TILL…MKRY), 134-154 (HLPQ…AYSA), 164-184 (LWML…YYAM), 200-220 (ILFG…TLSL), and 224-244 (IGLL…CVGL).

Belongs to the UbiA prenyltransferase family. The cofactor is Mg(2+).

It localises to the cell inner membrane. The enzyme catalyses all-trans-octaprenyl diphosphate + 4-hydroxybenzoate = 4-hydroxy-3-(all-trans-octaprenyl)benzoate + diphosphate. It participates in cofactor biosynthesis; ubiquinone biosynthesis. Its function is as follows. Catalyzes the prenylation of para-hydroxybenzoate (PHB) with an all-trans polyprenyl group. Mediates the second step in the final reaction sequence of ubiquinone-8 (UQ-8) biosynthesis, which is the condensation of the polyisoprenoid side chain with PHB, generating the first membrane-bound Q intermediate 3-octaprenyl-4-hydroxybenzoate. The protein is 4-hydroxybenzoate octaprenyltransferase of Marinomonas sp. (strain MWYL1).